The chain runs to 336 residues: Potassium channel subfamily K member 1 (336 aa).

Over 1–20 (MLQSLAGSSCVRLVERHRSA) the chain is Cytoplasmic. Residues 21–41 (WCFGFLVLGYLLYLVFGAVVF) form a helical membrane-spanning segment. At 42–103 (SSVELPYEDL…SNASGNWNWD (62 aa)) the chain is on the extracellular side. The N-linked (GlcNAc...) asparagine glycan is linked to asparagine 95. Residues 104–116 (FTSALFFASTVLS) constitute an intramembrane region (helical). Residues 117-122 (TTGYGH) lie within the membrane without spanning it. A selectivity filter 1 region spans residues 117–122 (TTGYGH). Over 123-132 (TVPLSDGGKA) the chain is Extracellular. Residues 133 to 156 (FCIIYSVIGIPFTLLFLTAVVQRV) form a helical membrane-spanning segment. The Cytoplasmic portion of the chain corresponds to 157–181 (TVHVTRRPVLYFHIRWGFSKQVVAI). The helical transmembrane segment at 182-202 (VHAVLLGFVTVSCFFFIPAAV) threads the bilayer. The Extracellular segment spans residues 203 to 211 (FSVLEDDWN). An intramembrane region (helical) is located at residues 212–224 (FLESFYFCFISLS). A selectivity filter 2 region spans residues 225–230 (TIGLGD). The stretch at 225 to 231 (TIGLGDY) is an intramembrane region. Residues 232–243 (VPGEGYNQKFRE) lie on the Extracellular side of the membrane. The chain crosses the membrane as a helical span at residues 244 to 267 (LYKIGITCYLLLGLIAMLVVLETF). The Cytoplasmic portion of the chain corresponds to 268-336 (CELHELKKFR…PPYEDGSADH (69 aa)). Residue lysine 274 forms a Glycyl lysine isopeptide (Lys-Gly) (interchain with G-Cter in SUMO) linkage. The tract at residues 293–299 (IMEHDQL) is important for intracellular retention in recycling endosomes. The tract at residues 310-336 (GLKEEQKQSEPFVASQSPPYEDGSADH) is disordered. Serine 326 is subject to Phosphoserine.

Belongs to the two pore domain potassium channel (TC 1.A.1.8) family. As to quaternary structure, homodimer; disulfide-linked. Heterodimer with KCNK2; disulfide-linked. In astrocytes, forms mostly heterodimeric potassium channels with KCNK2, with only a minor proportion of functional channels containing homodimeric KCNK1. Interacts with KCNK3 and KCNK9, forming functional heterodimeric channels. Interacts with GNG4. Identified in a complex with PSD and ARF6; interacts only with PSD that is bound to ARF6. Interacts with UBE2I. Post-translationally, sumoylation is controversial. Sumoylated by UBE2I. Not sumoylated when expressed in xenopus oocytes or mammalian cells. Sumoylation inactivates the channel, but does not interfere with expression at the cell membrane. Sumoylation of a single subunit is sufficient to silence the dimeric channel. Sumoylation of KCNK1 is sufficient to silence heterodimeric channels formed by KCNK1 and KCNK3 or KCNK9. Desumoylated by SENP1; this activates the channel. Desumoylated by SENP1; this strongly increases halothane-mediated activation of heterodimeric channels formed with KCNK9. SENP1 treatment has no effect. As to expression, detected in spiral ganglion neurons. Detected in hippocampus CA1 and CA1 regions and in the molecular layer of the dentate gyrus. Detected on hippocampus astrocytes. Highly expressed in the stria vascularis in the cochlea. Detected in pancreas islet beta cells. Detected in kidney, at brush border membranes in proximal tubules and in cytoplasmic structures in distal convoluted tubules, thick ascending limbs and collecting ducts (at protein level). Widely expressed. Detected in spiral ganglion cells. Highest expression in brain, kidney, thyroid, salivary gland, adrenal gland, prostate, epididymis, uterus, placenta, colon and jejunum. Moderate expression in eyes, pituitary, pancreas, smooth muscle, testis and ovary. Very low levels in lung, aorta, liver, heart, skeletal muscle, thymus and spleen. In the brain, highest expression in cerebellar granule cells, brainstem, hippocampus and cerebral cortex.

It is found in the cell membrane. The protein localises to the recycling endosome. Its subcellular location is the apical cell membrane. The protein resides in the cytoplasmic vesicle. It localises to the perikaryon. It is found in the cell projection. The protein localises to the dendrite. Its subcellular location is the synaptic cell membrane. It carries out the reaction K(+)(in) = K(+)(out). The catalysed reaction is NH4(+)(in) = NH4(+)(out). The enzyme catalyses Na(+)(in) = Na(+)(out). It catalyses the reaction Rb(+)(in) = Rb(+)(out). It carries out the reaction Cs(+)(in) = Cs(+)(out). The catalysed reaction is Li(+)(in) = Li(+)(out). The enzyme catalyses L-glutamate(out) = L-glutamate(in). It catalyses the reaction chloride(in) = chloride(out). Its activity is regulated as follows. Inhibited by quinine, quinidine, barium, and internal acidification. Its function is as follows. Ion channel that contributes to passive transmembrane potassium transport and to the regulation of the resting membrane potential in brain astrocytes, but also in kidney and in other tissues. Forms dimeric channels through which potassium ions pass in accordance with their electrochemical gradient. The channel is selective for K(+) ions at physiological potassium concentrations and at neutral pH, but becomes permeable to Na(+) at subphysiological K(+) levels and upon acidification of the extracellular medium. The homodimer has very low potassium channel activity, when expressed in heterologous systems, and can function as weakly inward rectifying potassium channel. Channel activity is modulated by activation of serotonin receptors. Heterodimeric channels containing KCNK1 and KCNK2 have much higher activity, and may represent the predominant form in astrocytes. Heterodimeric channels containing KCNK1 and KCNK3 or KCNK9 have much higher activity. Heterodimeric channels formed by KCNK1 and KCNK9 may contribute to halothane-sensitive currents. Mediates outward rectifying potassium currents in dentate gyrus granule cells and contributes to the regulation of their resting membrane potential. Contributes to the regulation of action potential firing in dentate gyrus granule cells and down-regulates their intrinsic excitability. In astrocytes, the heterodimer formed by KCNK1 and KCNK2 is required for rapid glutamate release in response to activation of G-protein coupled receptors, such as F2R and CNR1. Required for normal ion and water transport in the kidney. Contributes to the regulation of the resting membrane potential of pancreatic beta cells. The low channel activity of homodimeric KCNK1 may be due to sumoylation. The low channel activity may be due to rapid internalization from the cell membrane and retention in recycling endosomes. Permeable to monovalent cations with ion selectivity for K(+) &gt; Rb(+) &gt;&gt; NH4(+) &gt;&gt; Cs(+) = Na(+) = Li(+). This Mus musculus (Mouse) protein is Potassium channel subfamily K member 1 (Kcnk1).